Here is a 261-residue protein sequence, read N- to C-terminus: MWFLILFLALSLGGIDAAPPVQSRIVGGFNCEKNSQPWHVAVYRYNKYICGGVLLDRNWVLTAAHCHVSQYNVWLGKTKLFQREPSAQHRMVSKSFPHPDYNMSLLIIHNPEPEDDESNDLMLLRLSEPADITDAVKPIALPTEEPKLGSTCLVSGWGSITPTKFQTPDDLQCVSIKLLPNEVCVKNHNQKVTDVMLCAGEMGGGKDTCKGDSGGPLICDGVLHGITAWGPIPCGKPNTPGVYTKLIKFTNWIKDTMAKNP.

Positions 1–18 (MWFLILFLALSLGGIDAA) are cleaved as a signal peptide. A propeptide spans 19 to 24 (PPVQSR) (activation peptide). The region spanning 25–258 (IVGGFNCEKN…FTNWIKDTMA (234 aa)) is the Peptidase S1 domain. Disulfide bonds link Cys-31–Cys-173, Cys-50–Cys-66, Cys-152–Cys-219, Cys-184–Cys-198, and Cys-209–Cys-234. His-65 serves as the catalytic Charge relay system. Asn-102 is a glycosylation site (N-linked (GlcNAc...) asparagine). The active-site Charge relay system is the Asp-120. The active-site Charge relay system is the Ser-213.

This sequence belongs to the peptidase S1 family. Kallikrein subfamily.

It carries out the reaction Preferential cleavage of Arg-|-Xaa bonds in small molecule substrates. Highly selective action to release kallidin (lysyl-bradykinin) from kininogen involves hydrolysis of Met-|-Xaa or Leu-|-Xaa.. Its function is as follows. Glandular kallikreins cleave Met-Lys and Arg-Ser bonds in kininogen to release Lys-bradykinin. The polypeptide is Kallikrein 1-related peptidase b11 (Klk1b11) (Mus musculus (Mouse)).